Reading from the N-terminus, the 376-residue chain is Zinc transporter 7 (376 aa).

The Cytoplasmic portion of the chain corresponds to 1 to 37; the sequence is MLPLSIKDDEYKPPKFNLFGKISGWFRSILSDKTSRN. The chain crosses the membrane as a helical span at residues 38–58; the sequence is LFFFLCLNLSFAFVELLYGIW. Over 59–67 the chain is Lumenal; that stretch reads SNCLGLISD. The chain crosses the membrane as a helical span at residues 68–88; sequence SFHMFFDSTAILAGLAASVIS. Residues 89–102 lie on the Cytoplasmic side of the membrane; sequence KWRDNDAFSYGYVR. Residues 103-123 traverse the membrane as a helical segment; sequence AEVLAGFVNGLFLIFTAFFIF. Topologically, residues 124-140 are lumenal; the sequence is SEGVERALAPPDVHHER. The helical transmembrane segment at 141–161 threads the bilayer; it reads LLLVSILGFVVNLIGIFVFKH. The interval 161–218 is his-rich loop; that stretch reads HGGHGHSHGSGHGHSHSLFNGALDQAHGHVDHCHSHEVKHGAAHSHDHAHGHGHFHSH. Residues 162–236 are Cytoplasmic-facing; that stretch reads GGHGHSHGSG…TGPSRQILQG (75 aa). Positions 194–222 are enriched in basic and acidic residues; it reads HSHEVKHGAAHSHDHAHGHGHFHSHDGPS. The tract at residues 194–226 is disordered; that stretch reads HSHEVKHGAAHSHDHAHGHGHFHSHDGPSLKET. The chain crosses the membrane as a helical span at residues 237–257; sequence VFLHILADTLGSIGVIASAIM. Residues 258–262 are Lumenal-facing; sequence MQNFG. A helical transmembrane segment spans residues 263–283; the sequence is LMIADPICSILIAILIVVSVI. The Cytoplasmic segment spans residues 284-376; it reads PLLRESVGIL…LYVQIDFAAM (93 aa).

The protein belongs to the cation diffusion facilitator (CDF) transporter (TC 2.A.4) family. SLC30A subfamily. Homooligomer. Highly expressed in megakaryocytes and other bone marrow cells and in the epithelium of the small intestine. Expressed in testis (in Leydig cells), adrenal gland (in adrenal medula, zona fasciculata and zona of reticularis), and pituitary gland (in somatotropic cells).

The protein resides in the golgi apparatus membrane. It is found in the cytoplasmic vesicle. The protein localises to the golgi apparatus. Its subcellular location is the trans-Golgi network. It localises to the sarcoplasmic reticulum. The protein resides in the mitochondrion. It carries out the reaction Zn(2+)(in) = Zn(2+)(out). In terms of biological role, zinc ion transporter mediating zinc entry from the cytosol into the lumen of organelles along the secretory pathway. By contributing to zinc ion homeostasis within the early secretory pathway, regulates the activation and folding of enzymes like alkaline phosphatases. In Homo sapiens (Human), this protein is Zinc transporter 7.